Consider the following 677-residue polypeptide: DNA ligase (677 aa).

Residues 36–40, 85–86, and E122 contribute to the NAD(+) site; these read DAEYD and SI. K124 functions as the N6-AMP-lysine intermediate in the catalytic mechanism. Residues R145, E181, K298, and K322 each contribute to the NAD(+) site. Zn(2+) is bound by residues C416, C419, C434, and C440. Residues 600–677 enclose the BRCT domain; the sequence is LTPRPLAGKT…DEAALRALLD (78 aa).

The protein belongs to the NAD-dependent DNA ligase family. LigA subfamily. The cofactor is Mg(2+). Mn(2+) serves as cofactor.

It carries out the reaction NAD(+) + (deoxyribonucleotide)n-3'-hydroxyl + 5'-phospho-(deoxyribonucleotide)m = (deoxyribonucleotide)n+m + AMP + beta-nicotinamide D-nucleotide.. Its function is as follows. DNA ligase that catalyzes the formation of phosphodiester linkages between 5'-phosphoryl and 3'-hydroxyl groups in double-stranded DNA using NAD as a coenzyme and as the energy source for the reaction. It is essential for DNA replication and repair of damaged DNA. This chain is DNA ligase, found in Methylibium petroleiphilum (strain ATCC BAA-1232 / LMG 22953 / PM1).